Consider the following 238-residue polypeptide: Large ribosomal subunit protein uL1 (238 aa).

Belongs to the universal ribosomal protein uL1 family. Part of the 50S ribosomal subunit.

Its function is as follows. Binds directly to 23S rRNA. The L1 stalk is quite mobile in the ribosome, and is involved in E site tRNA release. In terms of biological role, protein L1 is also a translational repressor protein, it controls the translation of the L11 operon by binding to its mRNA. The protein is Large ribosomal subunit protein uL1 of Gloeobacter violaceus (strain ATCC 29082 / PCC 7421).